A 477-amino-acid polypeptide reads, in one-letter code: Ankyrin repeat, SAM and basic leucine zipper domain-containing protein 1 (477 aa).

The tract at residues 1–24 is disordered; it reads MATSALRGLAVAGGGESSESEDDG. Ser17, Ser18, and Ser20 each carry phosphoserine. ANK repeat units follow at residues 46-76, 80-109, 112-146, 150-179, 183-212, and 216-245; these read EKKE…SVDA, YGWT…NASF, DKQT…DPNV, RLMT…EVNT, NGYT…NKML, and DGKL…PLEG. Residues 274 to 336 enclose the SAM domain; that stretch reads SYAEFGDLEV…KILAALKELE (63 aa).

As to quaternary structure, interacts with DDX4, PIWIL1, RANBP9 and TDRD1.

It is found in the cytoplasm. Functionally, plays a central role during spermatogenesis by repressing transposable elements and preventing their mobilization, which is essential for the germline integrity. Acts via the piRNA metabolic process, which mediates the repression of transposable elements during meiosis by forming complexes composed of piRNAs and Piwi proteins and governs the methylation and subsequent repression of transposons. Its association with pi-bodies suggests a participation in the primary piRNAs metabolic process. Required prior to the pachytene stage to facilitate the production of multiple types of piRNAs, including those associated with repeats involved in the regulation of retrotransposons. May act by mediating protein-protein interactions during germ cell maturation. The chain is Ankyrin repeat, SAM and basic leucine zipper domain-containing protein 1 (ASZ1) from Saimiri boliviensis boliviensis (Bolivian squirrel monkey).